A 325-amino-acid chain; its full sequence is LIM and senescent cell antigen-like-containing domain protein 1 (325 aa).

Ala-2 carries the post-translational modification N-acetylalanine. LIM zinc-binding domains follow at residues 10–62 (CERC…CEHD), 71–121 (CHQC…CRPC), 135–184 (CQKC…CLPC), 193–243 (CGAC…CETH), and 252–303 (CFHC…CKKC).

As to quaternary structure, component of the heterotrimeric IPP (ILK-PINCH-PARVIN) complex composed of ILK, LIMS1/PINCH and PARVA; the complex binds to F-actin via the C-terminal tail of LIMS1 and the N-terminal region of PARVA, promoting F-actin filament bundling. Formation of the IPP complex is dependent on protein kinase C and precedes integrin-mediated cell adhesion and spreading. Competes with LIMS2 for interaction with ILK. Interacts with SH3/SH2 adapter NCK2, thereby linking the complex to cell surface receptors. Interacts (via LIM zinc-binding 5) with TGFB1I1.

It localises to the cell junction. Its subcellular location is the focal adhesion. It is found in the cell membrane. Within the IPP (ILK-PINCH-PARVIN) complex, binds to F-actin, promoting F-actin bundling, a process required to generate force for actin cytoskeleton reorganization and subsequent dynamic cell adhesion events such as cell spreading and migration. The polypeptide is LIM and senescent cell antigen-like-containing domain protein 1 (Lims1) (Mus musculus (Mouse)).